The chain runs to 498 residues: Calcium uptake protein, mitochondrial (498 aa).

The N-terminal 29 residues, 1–29, are a transit peptide targeting the mitochondrion; it reads MPALSHYRSVSSLPSVDRSFLLIQRLRIH. 4 EF-hand domains span residues 216–241, 243–278, 329–364, and 437–472; these read EFFM…VTLL, IPES…MRSQ, LTEE…AADA, and LSDN…RERD. Ca(2+) contacts are provided by aspartate 222, aspartate 224, aspartate 226, glutamate 233, aspartate 256, aspartate 258, asparagine 260, glutamate 262, and glutamate 267. Ca(2+) contacts are provided by aspartate 450, asparagine 452, aspartate 454, asparagine 456, and glutamate 461.

It belongs to the MICU1 family. MICU1 subfamily. Expressed in both green and non-green tissues, including roots, shoots, floral buds and pollen.

It localises to the mitochondrion inner membrane. Its subcellular location is the mitochondrion intermembrane space. Its function is as follows. Calcium-binding protein maintaining matrix calcium levels at low concentration. Regulates mitochondrial calcium dynamics in planta by restricting influx. This chain is Calcium uptake protein, mitochondrial, found in Arabidopsis thaliana (Mouse-ear cress).